A 67-amino-acid chain; its full sequence is Conotoxin TsMMSK-B021 (67 aa).

The N-terminal stretch at 1–20 is a signal peptide; sequence MMSKLGVLLTICLLLFPLTA. Positions 21-50 are excised as a propeptide; it reads VQLDGDQPADLPELRAQDFAPERSPWFDPV. Disulfide bonds link Cys-53–Cys-65, Cys-54–Cys-61, and Cys-58–Cys-64. Residue Pro-63 is modified to 4-hydroxyproline.

It belongs to the conotoxin M superfamily. Expressed by the venom duct.

Its subcellular location is the secreted. The polypeptide is Conotoxin TsMMSK-B021 (Conus tessulatus (Tessellate cone)).